Consider the following 156-residue polypeptide: Baculoviral IAP repeat-containing protein 5.2 (156 aa).

Residues 30–100 form a BIR repeat; it reads RLSTFANWPF…KHSPSCLFIA (71 aa). Threonine 46 carries the post-translational modification Phosphothreonine; by CDK1. The Zn(2+) site is built by cysteine 69, cysteine 72, histidine 89, and cysteine 96.

Belongs to the IAP family. As to quaternary structure, component of the CPC at least composed of survivin/birc5, incenp, cdca8/borealin and/or cdca9/dasra-A, and aurkb/aurora-B. Interacts directly with incenp (via N-terminus). Interacts with rxra; the interaction is stronger in the absence of 9-cis retinoic acids. Ubiquitination is required for centrosome-targeting.

It localises to the cytoplasm. It is found in the nucleus. The protein resides in the chromosome. The protein localises to the centromere. Its subcellular location is the cytoskeleton. It localises to the spindle. In terms of biological role, component of the chromosomal passenger complex (CPC), a complex that acts as a key regulator of mitosis. The CPC complex has essential functions at the centromere in ensuring correct chromosome alignment and segregation and is required for chromatin-induced microtubule stabilization and spindle assembly. Does not appear to exhibit anti-apoptotic activity. Plays a role in increasing blood vessel size during development. The sequence is that of Baculoviral IAP repeat-containing protein 5.2 (birc5.2) from Xenopus tropicalis (Western clawed frog).